The sequence spans 484 residues: Probable UDP-N-acetylglucosamine pyrophosphorylase (484 aa).

Residues 107–110 (LAGG) carry the Substrate binding motif. UTP is bound by residues 107 to 110 (LAGG), Lys121, Gln200, and Gly226. Asn227 provides a ligand contact to substrate. UTP is bound at residue Asp255. The Substrate binding motif lies at 304–305 (EY). Residue Lys377 participates in UTP binding. Lys407 contributes to the substrate binding site.

The protein belongs to the UDPGP type 1 family.

The protein resides in the cytoplasm. The enzyme catalyses N-acetyl-alpha-D-glucosamine 1-phosphate + UTP + H(+) = UDP-N-acetyl-alpha-D-glucosamine + diphosphate. It functions in the pathway nucleotide-sugar biosynthesis; UDP-N-acetyl-alpha-D-glucosamine biosynthesis; UDP-N-acetyl-alpha-D-glucosamine from N-acetyl-alpha-D-glucosamine 1-phosphate: step 1/1. The chain is Probable UDP-N-acetylglucosamine pyrophosphorylase from Caenorhabditis elegans.